The primary structure comprises 161 residues: Putative pre-16S rRNA nuclease (161 aa).

The tract at residues 141-161 (AAGSPPGALVPRNRVDPDRHA) is disordered.

Belongs to the YqgF nuclease family.

The protein localises to the cytoplasm. In terms of biological role, could be a nuclease involved in processing of the 5'-end of pre-16S rRNA. This Clavibacter michiganensis subsp. michiganensis (strain NCPPB 382) protein is Putative pre-16S rRNA nuclease.